The following is a 360-amino-acid chain: Magnesium-protoporphyrin IX monomethyl ester [oxidative] cyclase (360 aa).

The interval 1 to 20 (MVPPTAIAEASRSGGEPAIK) is disordered.

This sequence belongs to the AcsF family. It depends on Fe cation as a cofactor.

It carries out the reaction Mg-protoporphyrin IX 13-monomethyl ester + 3 NADPH + 3 O2 + 2 H(+) = 3,8-divinyl protochlorophyllide a + 3 NADP(+) + 5 H2O. It participates in porphyrin-containing compound metabolism; chlorophyll biosynthesis (light-independent). Functionally, catalyzes the formation of the isocyclic ring in chlorophyll biosynthesis. Mediates the cyclase reaction, which results in the formation of divinylprotochlorophyllide (Pchlide) characteristic of all chlorophylls from magnesium-protoporphyrin IX 13-monomethyl ester (MgPMME). In Synechococcus sp. (strain RCC307), this protein is Magnesium-protoporphyrin IX monomethyl ester [oxidative] cyclase.